Reading from the N-terminus, the 601-residue chain is Proteasome-associated ATPase (601 aa).

A compositionally biased stretch (gly residues) spans 1–15; sequence MSGPRSGSGSGGSTG. The tract at residues 1-29 is disordered; that stretch reads MSGPRSGSGSGGSTGRPGDADSQRSAYEK. The segment covering 18 to 29 has biased composition (basic and acidic residues); sequence GDADSQRSAYEK. Positions 19–106 form a coiled coil; that stretch reads DADSQRSAYE…LKEEVDRLAQ (88 aa). Residue 289–294 coordinates ATP; it reads GCGKTL. The docks into pockets in the proteasome alpha-ring stretch occupies residues 600–601; sequence YL.

It belongs to the AAA ATPase family. Homohexamer. Assembles into a hexameric ring structure that caps the 20S proteasome core. Strongly interacts with the prokaryotic ubiquitin-like protein Pup through a hydrophobic interface; the interacting region of ARC lies in its N-terminal coiled-coil domain. There is one Pup binding site per ARC hexamer ring. Upon ATP-binding, the C-terminus of ARC interacts with the alpha-rings of the proteasome core, possibly by binding to the intersubunit pockets.

Its pathway is protein degradation; proteasomal Pup-dependent pathway. Functionally, ATPase which is responsible for recognizing, binding, unfolding and translocation of pupylated proteins into the bacterial 20S proteasome core particle. May be essential for opening the gate of the 20S proteasome via an interaction with its C-terminus, thereby allowing substrate entry and access to the site of proteolysis. Thus, the C-termini of the proteasomal ATPase may function like a 'key in a lock' to induce gate opening and therefore regulate proteolysis. This chain is Proteasome-associated ATPase, found in Parafrankia sp. (strain EAN1pec).